We begin with the raw amino-acid sequence, 312 residues long: MSRLSEPSPYVEFDRRQWRALRMSTPLALTEAELIGLRGLGEQIDLLEVEEVFLPLARLLHLQVAARQRLFAATAEFLGEPQQNPDRPVPFIIGVAGSVAVGKSTTARVLQALLARWDHHPRVDLVTTDGFLYPNAELERRNLMHRKGFPESYNRRALMRFVTSVKSGSDYACAPVYSHLHYNIIPGAKQVVRHPDILILEGLNVLQTGPTLMVSDLFDFSLYVDARIEDIEQWYVSRFLAMRSTAFANPESHFHHYSALPDPEAVVAAREIWRTINRPNLVENILPTRPRATLVLRKDADHSIKRLRLRKL.

Residue 97–104 (GSVAVGKS) participates in ATP binding.

This sequence belongs to the prokaryotic pantothenate kinase family.

The protein localises to the cytoplasm. The catalysed reaction is (R)-pantothenate + ATP = (R)-4'-phosphopantothenate + ADP + H(+). The protein operates within cofactor biosynthesis; coenzyme A biosynthesis; CoA from (R)-pantothenate: step 1/5. This Mycobacterium marinum (strain ATCC BAA-535 / M) protein is Pantothenate kinase.